Here is a 579-residue protein sequence, read N- to C-terminus: 2-succinyl-5-enolpyruvyl-6-hydroxy-3-cyclohexene-1-carboxylate synthase (579 aa).

The protein belongs to the TPP enzyme family. MenD subfamily. As to quaternary structure, homodimer. Mg(2+) is required as a cofactor. It depends on Mn(2+) as a cofactor. Thiamine diphosphate serves as cofactor.

It catalyses the reaction isochorismate + 2-oxoglutarate + H(+) = 5-enolpyruvoyl-6-hydroxy-2-succinyl-cyclohex-3-ene-1-carboxylate + CO2. Its pathway is quinol/quinone metabolism; 1,4-dihydroxy-2-naphthoate biosynthesis; 1,4-dihydroxy-2-naphthoate from chorismate: step 2/7. It functions in the pathway quinol/quinone metabolism; menaquinone biosynthesis. Catalyzes the thiamine diphosphate-dependent decarboxylation of 2-oxoglutarate and the subsequent addition of the resulting succinic semialdehyde-thiamine pyrophosphate anion to isochorismate to yield 2-succinyl-5-enolpyruvyl-6-hydroxy-3-cyclohexene-1-carboxylate (SEPHCHC). The protein is 2-succinyl-5-enolpyruvyl-6-hydroxy-3-cyclohexene-1-carboxylate synthase of Oceanobacillus iheyensis (strain DSM 14371 / CIP 107618 / JCM 11309 / KCTC 3954 / HTE831).